A 267-amino-acid chain; its full sequence is tRNA pseudouridine synthase A (267 aa).

Asp53 serves as the catalytic Nucleophile. Position 111 (Tyr111) interacts with substrate.

The protein belongs to the tRNA pseudouridine synthase TruA family. In terms of assembly, homodimer.

The enzyme catalyses uridine(38/39/40) in tRNA = pseudouridine(38/39/40) in tRNA. Its function is as follows. Formation of pseudouridine at positions 38, 39 and 40 in the anticodon stem and loop of transfer RNAs. This chain is tRNA pseudouridine synthase A, found in Alcanivorax borkumensis (strain ATCC 700651 / DSM 11573 / NCIMB 13689 / SK2).